The following is a 441-amino-acid chain: Glutamate-1-semialdehyde 2,1-aminomutase (441 aa).

At K270 the chain carries N6-(pyridoxal phosphate)lysine.

It belongs to the class-III pyridoxal-phosphate-dependent aminotransferase family. HemL subfamily. As to quaternary structure, homodimer. It depends on pyridoxal 5'-phosphate as a cofactor.

It localises to the cytoplasm. It carries out the reaction (S)-4-amino-5-oxopentanoate = 5-aminolevulinate. It functions in the pathway porphyrin-containing compound metabolism; protoporphyrin-IX biosynthesis; 5-aminolevulinate from L-glutamyl-tRNA(Glu): step 2/2. The chain is Glutamate-1-semialdehyde 2,1-aminomutase (hemL) from Propionibacterium freudenreichii subsp. freudenreichii.